Reading from the N-terminus, the 687-residue chain is ERI1 exoribonuclease 2 (687 aa).

The Exonuclease domain maps to 38–226 (LIIIDFESTC…DDSRNTAKLA (189 aa)). Asp42, Glu44, and Asp156 together coordinate Mg(2+). Catalysis depends on Glu44, which acts as the Proton acceptor. An AMP-binding site is contributed by Glu44. The Proton acceptor role is filled by His213. Position 213 (His213) interacts with AMP. Position 218 (Asp218) interacts with Mg(2+). Zn(2+)-binding residues include Cys595, Cys597, Cys620, and Cys633. The GRF-type zinc finger occupies 595–642 (CNCGRRAKRLTVSNAGPNQGKAFYTCSVKKRNEENKKGCDYFKWEQTV).

It belongs to the ERI2 family. The cofactor is Mg(2+).

In Xenopus laevis (African clawed frog), this protein is ERI1 exoribonuclease 2 (eri2).